The primary structure comprises 444 residues: Phosphoglucosamine mutase (444 aa).

S102 functions as the Phosphoserine intermediate in the catalytic mechanism. Mg(2+) is bound by residues S102, D241, D243, and D245. S102 carries the post-translational modification Phosphoserine.

This sequence belongs to the phosphohexose mutase family. Mg(2+) is required as a cofactor. In terms of processing, activated by phosphorylation.

The catalysed reaction is alpha-D-glucosamine 1-phosphate = D-glucosamine 6-phosphate. Its function is as follows. Catalyzes the conversion of glucosamine-6-phosphate to glucosamine-1-phosphate. The chain is Phosphoglucosamine mutase from Pasteurella multocida (strain Pm70).